The chain runs to 312 residues: Glyoxylate/hydroxypyruvate reductase A (312 aa).

Arginine 227 is an active-site residue. The active-site Proton donor is the histidine 275.

This sequence belongs to the D-isomer specific 2-hydroxyacid dehydrogenase family. GhrA subfamily.

The protein resides in the cytoplasm. It catalyses the reaction glycolate + NADP(+) = glyoxylate + NADPH + H(+). It carries out the reaction (R)-glycerate + NAD(+) = 3-hydroxypyruvate + NADH + H(+). The catalysed reaction is (R)-glycerate + NADP(+) = 3-hydroxypyruvate + NADPH + H(+). Functionally, catalyzes the NADPH-dependent reduction of glyoxylate and hydroxypyruvate into glycolate and glycerate, respectively. The chain is Glyoxylate/hydroxypyruvate reductase A from Salmonella enteritidis PT4 (strain P125109).